The following is a 657-amino-acid chain: Macrolide export ATP-binding/permease protein MacB (657 aa).

Residues L5 to D242 enclose the ABC transporter domain. Residue G41 to S48 participates in ATP binding. Transmembrane regions (helical) follow at residues F276–G296, I538–V558, I596–V616, and L620–W640.

This sequence belongs to the ABC transporter superfamily. Macrolide exporter (TC 3.A.1.122) family. Homodimer.

The protein resides in the cell inner membrane. Its function is as follows. Non-canonical ABC transporter that contains transmembrane domains (TMD), which form a pore in the inner membrane, and an ATP-binding domain (NBD), which is responsible for energy generation. Confers resistance against macrolides. The chain is Macrolide export ATP-binding/permease protein MacB from Chlorobium phaeobacteroides (strain DSM 266 / SMG 266 / 2430).